The following is a 362-amino-acid chain: UDP-N-acetylglucosamine--N-acetylmuramyl-(pentapeptide) pyrophosphoryl-undecaprenol N-acetylglucosamine transferase (362 aa).

Residues 15 to 17 (TGG), Asn127, Arg165, Ser191, Ile247, 266 to 271 (ALTVSE), and Gln292 each bind UDP-N-acetyl-alpha-D-glucosamine.

It belongs to the glycosyltransferase 28 family. MurG subfamily.

It is found in the cell inner membrane. The catalysed reaction is di-trans,octa-cis-undecaprenyl diphospho-N-acetyl-alpha-D-muramoyl-L-alanyl-D-glutamyl-meso-2,6-diaminopimeloyl-D-alanyl-D-alanine + UDP-N-acetyl-alpha-D-glucosamine = di-trans,octa-cis-undecaprenyl diphospho-[N-acetyl-alpha-D-glucosaminyl-(1-&gt;4)]-N-acetyl-alpha-D-muramoyl-L-alanyl-D-glutamyl-meso-2,6-diaminopimeloyl-D-alanyl-D-alanine + UDP + H(+). It functions in the pathway cell wall biogenesis; peptidoglycan biosynthesis. Functionally, cell wall formation. Catalyzes the transfer of a GlcNAc subunit on undecaprenyl-pyrophosphoryl-MurNAc-pentapeptide (lipid intermediate I) to form undecaprenyl-pyrophosphoryl-MurNAc-(pentapeptide)GlcNAc (lipid intermediate II). In Shewanella sp. (strain MR-4), this protein is UDP-N-acetylglucosamine--N-acetylmuramyl-(pentapeptide) pyrophosphoryl-undecaprenol N-acetylglucosamine transferase.